Reading from the N-terminus, the 140-residue chain is uncharacterized protein (140 aa).

The VOC domain maps to 4 to 127; sequence TLTHLALHVP…AGNYVEFSYG (124 aa).

This is an uncharacterized protein from Pseudomonas aeruginosa (strain ATCC 15692 / DSM 22644 / CIP 104116 / JCM 14847 / LMG 12228 / 1C / PRS 101 / PAO1).